The following is a 334-amino-acid chain: Putative transport protein MJ1177 (334 aa).

The next 7 membrane-spanning stretches (helical) occupy residues 13–33 (VIVGLLIMLLYIIWPFIDVLA), 61–81 (LAISIYILPIMTITIYALLTF), 138–158 (IIDVGYLIVKVIMVLFLTFYF), 191–211 (SYKNLFISCVSLSIIITILSY), 234–254 (LLPILGGWMVYISIAIYFFLI), 259–279 (KAVFMFIYGELFLSIAPDFVI), and 293–313 (VLVVIAFLMAPLSLGLSGFAI).

The protein belongs to the autoinducer-2 exporter (AI-2E) (TC 2.A.86) family.

It is found in the cell membrane. In Methanocaldococcus jannaschii (strain ATCC 43067 / DSM 2661 / JAL-1 / JCM 10045 / NBRC 100440) (Methanococcus jannaschii), this protein is Putative transport protein MJ1177.